The chain runs to 516 residues: GMP synthase [glutamine-hydrolyzing] (516 aa).

The region spanning 8-198 (KILILDFGSQ…VVNICGCDTL (191 aa)) is the Glutamine amidotransferase type-1 domain. Residue C84 is the Nucleophile of the active site. Catalysis depends on residues H172 and E174. One can recognise a GMPS ATP-PPase domain in the interval 199-391 (WNIENIIEND…LGLPYNMLYR (193 aa)). 226–232 (SGGVDSS) provides a ligand contact to ATP.

As to quaternary structure, homodimer.

The enzyme catalyses XMP + L-glutamine + ATP + H2O = GMP + L-glutamate + AMP + diphosphate + 2 H(+). The protein operates within purine metabolism; GMP biosynthesis; GMP from XMP (L-Gln route): step 1/1. Catalyzes the synthesis of GMP from XMP. This Francisella tularensis subsp. tularensis (strain FSC 198) protein is GMP synthase [glutamine-hydrolyzing].